The sequence spans 3469 residues: Abnormal spindle-like microcephaly-associated protein homolog (3469 aa).

The segment at 1–24 is disordered; the sequence is MATRRAGRSWEVSPSGPRPAAGEA. The span at 13–24 shows a compositional bias: low complexity; the sequence is SPSGPRPAAGEA. Residues serine 273, serine 276, serine 361, serine 386, serine 420, and serine 599 each carry the phosphoserine modification. The region spanning 913 to 1049 is the Calponin-homology (CH) 1 domain; that stretch reads KTSKDILLAF…LLWKIAFAFQ (137 aa). Residues 1050-1069 are a coiled coil; that stretch reads VDISLNLDQLKEEIDFLKHT. At serine 1095 the chain carries Phosphoserine. Positions 1102 to 1253 constitute a Calponin-homology (CH) 2 domain; that stretch reads SESIKLLMEW…YLSFLCSRLL (152 aa). 38 IQ domains span residues 1258-1287, 1339-1370, 1385-1414, 1529-1560, 1574-1605, 1624-1653, 1647-1676, 1720-1749, 1743-1774, 1793-1822, 1816-1845, 1866-1895, 1889-1920, 1939-1970, 1962-1993, 2012-2041, 2035-2066, 2085-2116, 2108-2139, 2158-2189, 2181-2210, 2231-2262, 2304-2333, 2327-2358, 2377-2408, 2400-2431, 2450-2481, 2523-2554, 2681-2712, 2731-2762, 2851-2882, 2901-2930, 2924-2955, 2946-2977, 3021-3050, 3071-3102, 3173-3202, and 3196-3227; these read ETRAARLIQTTWRKYKLKTDMKRHQEQDKA, QNESASIIQRYWRRYSTRKQFLKLRYYSIILQ, YLWATVTIQRHWRASLRRKHDQQRYKMLKS, KRAAAIRLQTAFRRMKARNLYRQSRAACVLQS, LKKITTKLQAQVRKHQQLQKYRKIKKAALVIQ, TRSAVLVLQSAYRGMQARKKFIHILTSIIK, ILTSIIKIQSCYRAYISRKRFLRLKNATVK, MRESCIKLQAFVRGHLVRKQIRLQRQAAIS, QRQAAISLQSYFRMRKKRQYYLEIYKATLVIQ, VKRAVTCLQAAYRGYKVRQLIKQQSIAALK, QSIAALKIQTAFRGYRERKKYQYVLQSTIK, TRAAVISLQCAFRGWKVRKQIRRERQAAVR, ERQAAVRIQSAFRMAKAQKQFKLLKTAALVIQ, LREAALRLQSTWKGKRVRRQVQKQHKCAVIIQ, QHKCAVIIQSNYRMYVQQKKWKIMKKAARLIQ, TKAAAVVLQSAYRSMKVRKKIKECNRAAVT, CNRAAVTIQSTYRAYKTKKNYTNCRASAIIIQ, LKKTAVKIQAIYRGIRVRRHNRHLHMAATVIQ, LHMAATVIQAMFKMHQAKMRYHKMRTAAVIIQ, IMKAITVLQASFRGTRVRQTLRKMQSAATLIQ, MQSAATLIQSYYRRHRQQAYFTKLKKVTRT, LRHSIICIQAGFRGMKARRHLKSMHLAATLIQ, VQKAVIKIQSSYRGWMVRKKMQEVHRAATA, VHRAATAIQAAFRMHRANVKYQALKHASVVIQ, QRHSALILQAAFRGMKARGHLKNMHSSATLIQ, MHSSATLIQSTFRSLVVRKRFISLKRATVFVQ, LKKAVITIQSSYRRLVAKKKLQEMHRAAVLIQ, QRRSALIIQAVYKGMKARQLLREKHRAAIIIQ, RHLAATRIQSFYRMHRAKLDYQAKKTAVAVIQ, VQKSVRIIQAAFRGMKVRERLKSLSEVNMVAS, QKRAAVTLQQYFRTWQTRRQFLLYRKAAVVLQ, IRSSIIMIQARTRGFIQKRRFQKIKDSTIK, IKDSTIKIQAVWRSYKARKYLHQVKAACKIQA, QVKAACKIQAWYRYWKARKDYLAVLKAVKIIQ, RHQAACLIQANFRRYKGRQVFLRQKSAALT, LKKSTVVLQALVRGWLVRKRILEQRTKIRLLH, QNRAASVIQKAVRRFLLRKKQEKFNNAISR, and FNNAISRIQSLWRGYSWRKKNDCTKIKAIRLS.

It localises to the cytoplasm. The protein resides in the cytoskeleton. It is found in the spindle. The protein localises to the nucleus. Functionally, probable role in mitotic spindle regulation and coordination of mitotic processes. May have a preferential role in regulating neurogenesis. In Canis lupus familiaris (Dog), this protein is Abnormal spindle-like microcephaly-associated protein homolog (ASPM).